Here is a 420-residue protein sequence, read N- to C-terminus: Dynein axonemal assembly factor 4 (420 aa).

The region spanning 3–87 is the CS domain; sequence VRVSEFSWQQ…KEPVLWDSLS (85 aa). A mediates interaction with ESR1 and STUB1 region spans residues 7–103; it reads EFSWQQTPAT…EMMQRIREKS (97 aa). Over residues 164–192 the composition is skewed to basic and acidic residues; that stretch reads ECQKKADGQKRVQRKEKPLEGKQAEETKA. Residues 164-212 are disordered; the sequence is ECQKKADGQKRVQRKEKPLEGKQAEETKALKPRGLPRKAPPTRLPTRGR. 3 TPR repeats span residues 288–321, 322–355, and 364–397; these read PDWL…NCKI, PLLY…LTPP, and MKAH…DPAN.

As to quaternary structure, interacts with ZMYND10. Interacts with ESR1 and ESR2. Interacts with STUB1. Interacts with DNAAF2. Interacts with CCT3, CCT4, CCT5 and CCT8. Interacts with DNAAF6/PIH1D3.

The protein resides in the nucleus. Its subcellular location is the cytoplasm. It localises to the dynein axonemal particle. The protein localises to the cell projection. It is found in the neuron projection. Involved in neuronal migration during development of the cerebral neocortex. May regulate the stability and proteasomal degradation of the estrogen receptors that play an important role in neuronal differentiation, survival and plasticity. Axonemal dynein assembly factor required for ciliary motility. The polypeptide is Dynein axonemal assembly factor 4 (Mus musculus (Mouse)).